Consider the following 320-residue polypeptide: Protoheme IX farnesyltransferase (320 aa).

Residues 1 to 24 form a disordered region; the sequence is MSMITERPVSDPAGQSVSATGDGA. The next 8 membrane-spanning stretches (helical) occupy residues 33–55, 68–88, 117–137, 140–160, 183–203, 241–261, 262–282, and 300–320; these read AVVA…VTTV, LWLM…ASVL, NALI…AVFT, LAAG…TAWL, WAAV…VVFF, ILVF…LGAG, MGPI…VEAH, and FHWS…DALI.

This sequence belongs to the UbiA prenyltransferase family. Protoheme IX farnesyltransferase subfamily.

Its subcellular location is the cell membrane. The enzyme catalyses heme b + (2E,6E)-farnesyl diphosphate + H2O = Fe(II)-heme o + diphosphate. Its pathway is porphyrin-containing compound metabolism; heme O biosynthesis; heme O from protoheme: step 1/1. Converts heme B (protoheme IX) to heme O by substitution of the vinyl group on carbon 2 of heme B porphyrin ring with a hydroxyethyl farnesyl side group. In Salinispora tropica (strain ATCC BAA-916 / DSM 44818 / JCM 13857 / NBRC 105044 / CNB-440), this protein is Protoheme IX farnesyltransferase.